The sequence spans 359 residues: MKRPPHHPVTVADVGGTHLRWARWSPDGGLGEVHTTPSPGHARRPGAGAADLQAELIRELASRVEPGARAGVSLGAAMDHHSGTAYASAPLWGPQVSPFDVPAALRAARPDVHWTVVNDVTAGLLHLAEMVRDAGVRKACLVTISTGIACRTMDLRTGGIPVDAAGLQGEIGHLPATVLADGVPVVTRCDCGEPGHVAASSSGPGIRRVAAVLARRDPATWAGSGPTTRMMAGSGFEDAFRAALDDGDPVAADLLTAVTAPIADLLRTALCLDPELDLIALTGGVAHGLEPHYSAAVHDHLRRRGLYLTSEREPDWLTGRIRVVPPATADPLVGAGLAALAAGPVPAYSGGGREALVGR.

The interval 28–48 (GGLGEVHTTPSPGHARRPGAG) is disordered.

Belongs to the ROK (NagC/XylR) family.

The catalysed reaction is 2-epi-5-epi-valiolone + ATP = 2-epi-5-epi-valiolone 7-phosphate + ADP + H(+). Catalyzes the conversion of 2-epi-5-epi-valiolone to 2-epi-5-epi-valiolone 7-phosphate. Involved in the biosynthesis of the acarviose moiety of the alpha-glucosidase inhibitor acarbose. In Actinoplanes sp. (strain ATCC 31044 / CBS 674.73 / SE50/110), this protein is 2-epi-5-epi-valiolone 7-kinase.